Consider the following 373-residue polypeptide: D-alanine--D-alanine ligase (373 aa).

One can recognise an ATP-grasp domain in the interval 156-363; the sequence is KKLLAADGLP…YPTLLATMIE (208 aa). An ATP-binding site is contributed by 184 to 239; sequence CERLGLPVFVKPARGGSSIGVSRVSSWDQLPAAVARARRHDPKVIVEAAISGRELE. 3 residues coordinate Mg(2+): Asp-318, Glu-330, and Asn-332.

Belongs to the D-alanine--D-alanine ligase family. It depends on Mg(2+) as a cofactor. The cofactor is Mn(2+).

The protein resides in the cytoplasm. It catalyses the reaction 2 D-alanine + ATP = D-alanyl-D-alanine + ADP + phosphate + H(+). Its pathway is cell wall biogenesis; peptidoglycan biosynthesis. Its function is as follows. Cell wall formation. The protein is D-alanine--D-alanine ligase of Mycobacterium tuberculosis (strain ATCC 25177 / H37Ra).